Reading from the N-terminus, the 354-residue chain is UPF0324 membrane protein BL1094 (354 aa).

The next 10 membrane-spanning stretches (helical) occupy residues 12 to 33, 43 to 65, 86 to 108, 112 to 129, 138 to 160, 175 to 197, 239 to 256, 271 to 293, 300 to 321, and 331 to 353; these read IATVDMLFIGVLTLLASLFASW, FGALIIALLIGMIIQFPIRSAYV, LLRLGIILLGFKLNLAVLFTQGI, PIAAVVVTLTIIVCYAIA, LAILTAGGTGICGAAAVMGLAGS, VTMAVAIVAIMGTVFALLEIALG, LSRVLMLVFAAIIIAIWW, VAFPWFMLGFIGASIIGTFVPFV, LVDFAYIVLGMAMAALGINVNF, and PMLASFLTSILLMCFAAGVAMLF.

It belongs to the UPF0324 family.

The protein resides in the cell membrane. The polypeptide is UPF0324 membrane protein BL1094 (Bifidobacterium longum (strain NCC 2705)).